Reading from the N-terminus, the 340-residue chain is Glycerol-3-phosphate dehydrogenase [NAD(P)+] (340 aa).

The NADPH site is built by serine 23, tryptophan 24, arginine 43, lysine 44, and lysine 113. Sn-glycerol 3-phosphate contacts are provided by lysine 113, glycine 141, and threonine 143. Position 145 (alanine 145) interacts with NADPH. Sn-glycerol 3-phosphate contacts are provided by lysine 196, aspartate 249, serine 259, arginine 260, and asparagine 261. The Proton acceptor role is filled by lysine 196. Arginine 260 is an NADPH binding site. Glutamate 286 is an NADPH binding site.

This sequence belongs to the NAD-dependent glycerol-3-phosphate dehydrogenase family.

Its subcellular location is the cytoplasm. It carries out the reaction sn-glycerol 3-phosphate + NAD(+) = dihydroxyacetone phosphate + NADH + H(+). The catalysed reaction is sn-glycerol 3-phosphate + NADP(+) = dihydroxyacetone phosphate + NADPH + H(+). The protein operates within membrane lipid metabolism; glycerophospholipid metabolism. Its function is as follows. Catalyzes the reduction of the glycolytic intermediate dihydroxyacetone phosphate (DHAP) to sn-glycerol 3-phosphate (G3P), the key precursor for phospholipid synthesis. The polypeptide is Glycerol-3-phosphate dehydrogenase [NAD(P)+] (Zymomonas mobilis subsp. mobilis (strain ATCC 31821 / ZM4 / CP4)).